The chain runs to 342 residues: Pre-mRNA-splicing factor 18 (342 aa).

Met1 is subject to N-acetylmethionine.

It belongs to the PRP18 family. In terms of assembly, heterodimer with PPIH. Interacts with PRPF4 and with the spliceosome. Part of a complex containing U4/U6 snRNPs.

The protein localises to the nucleus speckle. In terms of biological role, participates in the second step of pre-mRNA splicing. This is Pre-mRNA-splicing factor 18 (PRPF18) from Bos taurus (Bovine).